A 336-amino-acid chain; its full sequence is MKERIVNLETLDFETSQEVSLRPNLWEDFIGQEKIKSNLQISICAAKKRQESLDHMLFFGPPGLGKTSISHIIAKEMETNIKITAAPMIEKSGDLAAILTNLQAKDILFIDEIHRLSPAIEEVLYPAMEDFRLDIIIGSGPAAQTIKIDLPPFTLIGATTRAGMLSNPLRDRFGMSFRMQFYSPSELSLIIKKAAVKLNQDIKEESADEIAKRSRGTPRIALRLLKRVRDFALVKNSSLMDLNITLHALNELGVNELGFDEADLAYLSLLANAQGRPVGLNTIAASMREDEGTIEDVIEPFLLANGYLERTAKGRIATPKTHALLKIPTLNPQTLF.

Positions 1 to 182 (MKERIVNLET…FGMSFRMQFY (182 aa)) are large ATPase domain (RuvB-L). ATP contacts are provided by residues L21, R22, G63, K66, T67, S68, 129–131 (EDF), R172, Y182, and R219. T67 contributes to the Mg(2+) binding site. Residues 183–253 (SPSELSLIIK…ITLHALNELG (71 aa)) are small ATPAse domain (RuvB-S). Positions 256-336 (ELGFDEADLA…IPTLNPQTLF (81 aa)) are head domain (RuvB-H). DNA contacts are provided by R310 and R315.

It belongs to the RuvB family. Homohexamer. Forms an RuvA(8)-RuvB(12)-Holliday junction (HJ) complex. HJ DNA is sandwiched between 2 RuvA tetramers; dsDNA enters through RuvA and exits via RuvB. An RuvB hexamer assembles on each DNA strand where it exits the tetramer. Each RuvB hexamer is contacted by two RuvA subunits (via domain III) on 2 adjacent RuvB subunits; this complex drives branch migration. In the full resolvosome a probable DNA-RuvA(4)-RuvB(12)-RuvC(2) complex forms which resolves the HJ.

It localises to the cytoplasm. The enzyme catalyses ATP + H2O = ADP + phosphate + H(+). Functionally, the RuvA-RuvB-RuvC complex processes Holliday junction (HJ) DNA during genetic recombination and DNA repair, while the RuvA-RuvB complex plays an important role in the rescue of blocked DNA replication forks via replication fork reversal (RFR). RuvA specifically binds to HJ cruciform DNA, conferring on it an open structure. The RuvB hexamer acts as an ATP-dependent pump, pulling dsDNA into and through the RuvAB complex. RuvB forms 2 homohexamers on either side of HJ DNA bound by 1 or 2 RuvA tetramers; 4 subunits per hexamer contact DNA at a time. Coordinated motions by a converter formed by DNA-disengaged RuvB subunits stimulates ATP hydrolysis and nucleotide exchange. Immobilization of the converter enables RuvB to convert the ATP-contained energy into a lever motion, pulling 2 nucleotides of DNA out of the RuvA tetramer per ATP hydrolyzed, thus driving DNA branch migration. The RuvB motors rotate together with the DNA substrate, which together with the progressing nucleotide cycle form the mechanistic basis for DNA recombination by continuous HJ branch migration. Branch migration allows RuvC to scan DNA until it finds its consensus sequence, where it cleaves and resolves cruciform DNA. This Helicobacter pylori (strain P12) protein is Holliday junction branch migration complex subunit RuvB.